The primary structure comprises 317 residues: Olfactory receptor 2B11 (317 aa).

Over Met1–Leu29 the chain is Extracellular. The N-linked (GlcNAc...) asparagine glycan is linked to Asn5. The helical transmembrane segment at Pro30–Ser53 threads the bilayer. Residues Arg54 to Ser61 lie on the Cytoplasmic side of the membrane. Residues Pro62–Pro83 traverse the membrane as a helical segment. Topologically, residues Gln84–Gln104 are extracellular. Cys101 and Cys193 are joined by a disulfide. Residues Tyr105–Leu124 form a helical membrane-spanning segment. The Cytoplasmic segment spans residues Asp125–Ala143. The chain crosses the membrane as a helical span at residues Leu144 to Val162. The Extracellular segment spans residues Gln163–Asn199. The N-linked (GlcNAc...) asparagine glycan is linked to Asn199. The helical transmembrane segment at Asp200–Gly223 threads the bilayer. Residues Phe224–Lys240 lie on the Cytoplasmic side of the membrane. A helical transmembrane segment spans residues Ala241 to Tyr263. At Leu264–Lys276 the chain is on the extracellular side. The helical transmembrane segment at Phe277–Leu296 threads the bilayer. Residues Arg297–Gly317 lie on the Cytoplasmic side of the membrane.

This sequence belongs to the G-protein coupled receptor 1 family.

The protein localises to the cell membrane. Odorant receptor. This is Olfactory receptor 2B11 (OR2B11) from Homo sapiens (Human).